The sequence spans 412 residues: Proline-rich protein 30 (412 aa).

Polar residues-rich tracts occupy residues 1–15 (MLPQNKDQVLPQTSV) and 23–39 (GFSQLVDSSPHNLQPLS). Disordered regions lie at residues 1 to 88 (MLPQ…HPYS), 123 to 174 (PLTP…SNRQ), and 317 to 412 (RPKE…KSSV). Composition is skewed to low complexity over residues 50 to 59 (PFSSTQSRRP), 126 to 142 (PSFSPSQPQNSSLPHSP), and 334 to 350 (QLPASQPPAAQARADPV). Polar residues predominate over residues 353-372 (TPSQTRSFRSAGLQSPNSPR).

This is Proline-rich protein 30 (PRR30) from Homo sapiens (Human).